A 179-amino-acid polypeptide reads, in one-letter code: uncharacterized protein (179 aa).

Helical transmembrane passes span 9–31 (WILV…VSTL), 41–63 (AFLL…YGSF), 114–136 (AYYG…LLGA), and 146–168 (AFWG…NYLM).

The protein localises to the cell membrane. This is an uncharacterized protein from Aquifex aeolicus (strain VF5).